The primary structure comprises 342 residues: MSVDINILAIESSCDESGVAIYNPARGVLANQVFSQIDLHRVFGGVVPELAARDHLKRFPVLMNQALTQAKLNLSAIDVIAYTSGPGLLGALMTGATFAHSLAFAIRRPVLKIHHMEGHLLSPFLAPLKPEFPFIALLVSGGHTQLLSVKAVGDYEILGQTLDDAVGEAFDKMAKIMGLPYPGGPELAALAKNGDEQRFVMPRPMINRPDLDFSFSGLKTHVRLLIAEQNNDPQTRADIAASFQKTVVETLLIKCRRAWKKTGYRDLVVSGGVSANQALRAALQKNADEHKKRVFFPPLTLCGDNALMIAHAASFRLQEARIDDDVIDVTARWELSRLSTPL.

Residues His-115 and His-119 each coordinate Fe cation. Substrate is bound by residues 138-142 (LVSGG), Asp-171, Gly-184, and Asn-276. Asp-304 contributes to the Fe cation binding site.

This sequence belongs to the KAE1 / TsaD family. It depends on Fe(2+) as a cofactor.

The protein resides in the cytoplasm. It catalyses the reaction L-threonylcarbamoyladenylate + adenosine(37) in tRNA = N(6)-L-threonylcarbamoyladenosine(37) in tRNA + AMP + H(+). Functionally, required for the formation of a threonylcarbamoyl group on adenosine at position 37 (t(6)A37) in tRNAs that read codons beginning with adenine. Is involved in the transfer of the threonylcarbamoyl moiety of threonylcarbamoyl-AMP (TC-AMP) to the N6 group of A37, together with TsaE and TsaB. TsaD likely plays a direct catalytic role in this reaction. In Dichelobacter nodosus (strain VCS1703A), this protein is tRNA N6-adenosine threonylcarbamoyltransferase.